Consider the following 424-residue polypeptide: MKNVLAVFVVLIFVLGAFGTSGPAEAARDSGTAKSGLYVEKVSGLRKDFIKGVDVSSIIALEESGVAFYNESGKKQDIFKTLKEAGVNYVRVRIWNDPYDANGNGYGGGNNDLEKAIQIGKRATANGMKLLADFHYSDFWADPAKQKAPKAWANLNFEDKKTALYQYTKQSLKAMKAAGIDIGMVQVGNETNGGLAGETDWAKMSQLFNAGSQAVRETDSNILVALHFTNPETSGRYAWIAETLHRHHVDYDVFASSYYPFWHGTLKNLTSVLTSVADTYGKKVMVAETSYTYTAEDGDGHGNTAPKNGQTLNNPVTVQGQANAVRDVIQAVSDVGEAGIGVFYWEPAWIPVGPAHRLEKNKALWETYGSGWATSYAAEYDPEDAGKWFGGSAVDNQALFDFKGRPLPSLHVFQYVDTGTPFKN.

Residues 1–26 (MKNVLAVFVVLIFVLGAFGTSGPAEA) form the signal peptide. A substrate-binding site is contributed by 142 to 145 (DPAK). Glutamate 190 serves as the catalytic Proton donor. Residues 229–230 (TN) and histidine 263 each bind substrate. Residue glutamate 288 is the Nucleophile of the active site. Position 292 (threonine 292) interacts with substrate. Residues aspartate 297, aspartate 299, histidine 301, and asparagine 303 each contribute to the Ca(2+) site. Positions 307 and 384 each coordinate substrate. Ca(2+) contacts are provided by serine 392 and aspartate 395.

The protein belongs to the glycosyl hydrolase 53 family. Ca(2+) is required as a cofactor.

It catalyses the reaction The enzyme specifically hydrolyzes (1-&gt;4)-beta-D-galactosidic linkages in type I arabinogalactans.. Functionally, involved in galactan degradation. Degrades arabinose-free galactan to galactooligosaccharides, producing galactotetraose as the main product along with galactotriose, galactobiose, and galactose. May hydrolyze the beta-1,4-galactan linkages of the galactan portion of arabinogalactan type I, a pectic plant polysaccharide from which most of the arabinose has been removed. The chain is Endo-beta-1,4-galactanase (ganB) from Bacillus licheniformis (strain ATCC 14580 / DSM 13 / JCM 2505 / CCUG 7422 / NBRC 12200 / NCIMB 9375 / NCTC 10341 / NRRL NRS-1264 / Gibson 46).